The chain runs to 126 residues: Large ribosomal subunit protein uL22 (126 aa).

This sequence belongs to the universal ribosomal protein uL22 family. As to quaternary structure, part of the 50S ribosomal subunit.

Its function is as follows. This protein binds specifically to 23S rRNA; its binding is stimulated by other ribosomal proteins, e.g. L4, L17, and L20. It is important during the early stages of 50S assembly. It makes multiple contacts with different domains of the 23S rRNA in the assembled 50S subunit and ribosome. Functionally, the globular domain of the protein is located near the polypeptide exit tunnel on the outside of the subunit, while an extended beta-hairpin is found that lines the wall of the exit tunnel in the center of the 70S ribosome. This is Large ribosomal subunit protein uL22 from Prochlorococcus marinus (strain NATL2A).